Reading from the N-terminus, the 118-residue chain is Urease subunit beta (118 aa).

The protein belongs to the urease beta subunit family. In terms of assembly, heterotrimer of UreA (gamma), UreB (beta) and UreC (alpha) subunits. Three heterotrimers associate to form the active enzyme.

It localises to the cytoplasm. The enzyme catalyses urea + 2 H2O + H(+) = hydrogencarbonate + 2 NH4(+). Its pathway is nitrogen metabolism; urea degradation; CO(2) and NH(3) from urea (urease route): step 1/1. In Aliivibrio fischeri (strain ATCC 700601 / ES114) (Vibrio fischeri), this protein is Urease subunit beta.